Consider the following 405-residue polypeptide: Aspartokinase (405 aa).

2 consecutive ACT domains span residues 267-344 and 345-405; these read VSME…AKVS and IVGV…QLDQ.

Belongs to the aspartokinase family.

It catalyses the reaction L-aspartate + ATP = 4-phospho-L-aspartate + ADP. It functions in the pathway amino-acid biosynthesis; L-lysine biosynthesis via DAP pathway; (S)-tetrahydrodipicolinate from L-aspartate: step 1/4. The protein operates within amino-acid biosynthesis; L-methionine biosynthesis via de novo pathway; L-homoserine from L-aspartate: step 1/3. Its pathway is amino-acid biosynthesis; L-threonine biosynthesis; L-threonine from L-aspartate: step 1/5. This chain is Aspartokinase (lysC), found in Helicobacter pylori (strain ATCC 700392 / 26695) (Campylobacter pylori).